The primary structure comprises 143 residues: Larval cuticle protein LCP-17 (143 aa).

An N-terminal signal peptide occupies residues 1–16 (MKFLIVLAVAVACASA). Residues 41 to 110 (EGHFQFNYET…PQGSHLPTPH (70 aa)) enclose the Chitin-binding type R&amp;R domain.

Component of the cuticle of the larva of Bombyx mori. This Bombyx mori (Silk moth) protein is Larval cuticle protein LCP-17 (LCP17).